Here is a 175-residue protein sequence, read N- to C-terminus: MSRRNVAKKREVSADRKYNSKIVAKFINHVMKKGKRALAEKIVYGAMEKAEKQLGVPAMDVLTGVLANISPAVELRSFRAGGVNYRIPVPIKEERSRFIAFGWLLSEARKRKGMCSRDRIALELLEAHSGHGGAFRKFEENVKVAESGRAFSHFRFFNTGGARRSNPSNNIGGNR.

Belongs to the universal ribosomal protein uS7 family. In terms of assembly, part of the 30S ribosomal subunit. Contacts proteins S9 and S11.

Functionally, one of the primary rRNA binding proteins, it binds directly to 16S rRNA where it nucleates assembly of the head domain of the 30S subunit. Is located at the subunit interface close to the decoding center, probably blocks exit of the E-site tRNA. The sequence is that of Small ribosomal subunit protein uS7 from Neorickettsia sennetsu (strain ATCC VR-367 / Miyayama) (Ehrlichia sennetsu).